The primary structure comprises 75 residues: UPF0352 protein CKO_00587 (75 aa).

The protein belongs to the UPF0352 family.

This chain is UPF0352 protein CKO_00587, found in Citrobacter koseri (strain ATCC BAA-895 / CDC 4225-83 / SGSC4696).